The chain runs to 400 residues: Multidrug resistance protein MdtH (400 aa).

Helical transmembrane passes span 13–33, 34–54, 99–116, 139–159, 165–185, 214–234, 244–264, 289–309, 340–360, and 365–385; these read YFLL…FPLI, SIRF…ALGL, PWIL…GTLF, LLLM…SWLL, LVCW…AWLL, VLTL…FPIV, AVKW…YPIA, FPVG…LFYL, LGLA…YDIG, and LPEL…YALH.

The protein belongs to the major facilitator superfamily. DHA1 family. MdtH (TC 2.A.1.2.21) subfamily.

The protein localises to the cell inner membrane. This chain is Multidrug resistance protein MdtH, found in Proteus mirabilis (strain HI4320).